A 441-amino-acid polypeptide reads, in one-letter code: Chromosomal replication initiator protein DnaA (441 aa).

The interval 1-71 (MDIRWEEILE…AVYQVVGDRF (71 aa)) is domain I, interacts with DnaA modulators. The tract at residues 71-99 (FKVSILTESETSSHVLKEVIQSKFDDSDS) is domain II. Positions 100–318 (DLNPEYIFSN…GIVNDLVMYK (219 aa)) are domain III, AAA+ region. ATP is bound by residues Gly143, Gly145, Lys146, and Thr147. Residues 319–441 (KAYEYFLLTE…HTIKHKISFQ (123 aa)) are domain IV, binds dsDNA.

Belongs to the DnaA family. As to quaternary structure, oligomerizes as a right-handed, spiral filament on DNA at oriC.

It is found in the cytoplasm. Functionally, plays an essential role in the initiation and regulation of chromosomal replication. ATP-DnaA binds to the origin of replication (oriC) to initiate formation of the DNA replication initiation complex once per cell cycle. Binds the DnaA box (a 9 base pair repeat at the origin) and separates the double-stranded (ds)DNA. Forms a right-handed helical filament on oriC DNA; dsDNA binds to the exterior of the filament while single-stranded (ss)DNA is stabiized in the filament's interior. The ATP-DnaA-oriC complex binds and stabilizes one strand of the AT-rich DNA unwinding element (DUE), permitting loading of DNA polymerase. After initiation quickly degrades to an ADP-DnaA complex that is not apt for DNA replication. Binds acidic phospholipids. This chain is Chromosomal replication initiator protein DnaA, found in Leptospira biflexa serovar Patoc (strain Patoc 1 / Ames).